We begin with the raw amino-acid sequence, 580 residues long: Viral transcription factor IE2 (580 aa).

The segment covering 1-11 (MESSAKRKMDP) has biased composition (basic and acidic residues). Disordered regions lie at residues 1 to 30 (MESSAKRKMDPDNPDEGPSSKVPRPETPVT) and 99 to 161 (DSSS…VIIK). Positions 99 to 133 (DSSSTGPTLTTHSCSVSSAPLNKPTPTSVAVTNTP) are enriched in polar residues. Residues K175 and K180 each participate in a glycyl lysine isopeptide (Lys-Gly) (interchain with G-Cter in SUMO) cross-link. Positions 199–202 (CIVI) match the SUMO-interacting motif 1/SIM1 motif. 2 positions are modified to phosphoserine; by host CK2: S203 and S205. A disordered region spans residues 206–335 (EEEQGEEVET…KSKRISELDN (130 aa)). Composition is skewed to low complexity over residues 216-236 (RGATASSPSTGSGTPRVTSPT), 259-271 (SSSSSSSCSSASD), and 302-317 (AASSSLLSCGHQSSGG). The SUMO-interacting motif 1/SIM2 signature appears at 410–413 (IQII). The SUMO-interacting motif 1/SIM3 signature appears at 501 to 504 (VDLL).

This sequence belongs to the HHV-5 IE2 protein family. Interacts with host SUMO-modified form of TATA-binding protein (TBP)-associated factor 12/TAF12 in a SIM-dependent manner; this interaction increases the transactivation activity of IE2. Interacts with host CHAF1A. Interacts with several components of the host transcriptional machinery including TBP, TF2B and CREB1. Interacts with host DNA replication licensing factor MCM3. Interacts with host PLSCR1; this interaction inhibits IE2 transactivating activity. In terms of processing, phosphorylated by host CK2 at Ser-203 and Ser-205; leading to enhanced SUMOylation. SUMOylated; SUMOylation is enhanced when IE2 is phosphorylated by host CK2. The sumoylation is necessary for efficient replication of the virus and thus for the function of this viral transcription factor.

The protein resides in the host nucleus. Its function is as follows. Stimulates viral early and late gene expression and thus play a crucial role in the regulation of productive infection. Selectively drives host RNA Pol II transcription initiation at a subset of viral early-late and late promoters without substantially affecting Pol II transcription of expressed host genes. Mechanistically, forms a repressive complex at the major immediate-early promoter region involving direct association with host nucleosomes and TBP. Concerning activation, stimulates transcription by binding nearby, but not within, core promoter regions. In addition, activates quiescent cells to reenter the cell cycle and up-regulates several E2F-responsive genes, which are responsible for pushing the cell into S phase. In S-phase, inhibits cellular DNA synthesis and blocks further cell cycle progression. The chain is Viral transcription factor IE2 (UL122) from Human cytomegalovirus (strain AD169) (HHV-5).